The following is a 149-amino-acid chain: FKBP-type 16 kDa peptidyl-prolyl cis-trans isomerase (149 aa).

Residues 2–72 (SESVQSNSAV…FSLEPDAAFG (71 aa)) form the PPIase FKBP-type domain.

It belongs to the FKBP-type PPIase family.

It carries out the reaction [protein]-peptidylproline (omega=180) = [protein]-peptidylproline (omega=0). In terms of biological role, PPIases accelerate the folding of proteins. Substrate specificity carried out with 'Suc-Ala-Xaa-Pro-Phe-4-nitroanilide', where Xaa is the amino acid tested, was found to be Phe &gt; Leu &gt;&gt; Ile &gt; Lys = Ala &gt; Trp &gt; His &gt;&gt; Gln. The sequence is that of FKBP-type 16 kDa peptidyl-prolyl cis-trans isomerase (fkpB) from Escherichia coli O6:H1 (strain CFT073 / ATCC 700928 / UPEC).